Reading from the N-terminus, the 904-residue chain is uncharacterized protein (904 aa).

Disordered stretches follow at residues 247-275 and 328-360; these read KIGKSRTTEDVSMPPLHRGVGTPANSLEF and GDSQTPGLHYPPTAGAQTLSPTSHPSSANHHFS. Positions 342-360 are enriched in polar residues; it reads GAQTLSPTSHPSSANHHFS. A helical transmembrane segment spans residues 778 to 798; the sequence is VVQGMILMFAGGKLIFGGRVL.

It localises to the membrane. This is an uncharacterized protein from Homo sapiens (Human).